Here is a 305-residue protein sequence, read N- to C-terminus: Endonuclease 1 (305 aa).

The first 28 residues, 1 to 28, serve as a signal peptide directing secretion; sequence MASAFRSSTRLILVLGILILCSVSSVRS. A divalent metal cation is bound by residues Trp-29 and His-34. 29–34 contacts substrate; that stretch reads WSKEGH. An intrachain disulfide couples Cys-38 to Cys-69. Residues Asp-73 and His-88 each contribute to the a divalent metal cation site. Substrate is bound by residues 73 to 79, 88 to 91, and 98 to 103; these read DQIRHWY, HYID, and SYEYSR. 3 disulfides stabilise this stretch: Cys-97–Cys-249, Cys-105–Cys-115, and Cys-230–Cys-236. The substrate site is built by Asn-122 and Tyr-139. An N-linked (GlcNAc...) asparagine glycan is attached at Asn-122. Asn-140 carries N-linked (GlcNAc...) asparagine glycosylation. Residues His-150, Asp-154, His-160, His-184, and Asp-188 each coordinate a divalent metal cation. The interval 150-199 is substrate binding; it reads HFMGDIHQPMHVGFTSDEGGNTIDLRWYKHKSNLHHVWDREIILTALKEN. Asn-214 carries an N-linked (GlcNAc...) asparagine glycan. Residues 287 to 305 constitute a propeptide, removed in mature form; that stretch reads MILNRVFSDDHAIAGVAAT.

The protein belongs to the nuclease type I family. As to quaternary structure, monomer. Mn(2+) serves as cofactor. Requires Ca(2+) as cofactor. In terms of tissue distribution, mostly expressed in flowers and during leaf and stem senescence, and, to a lower extent, detectable at low levels in roots, leaves, and stems. Particularly expressed in senescing tissues in a NAC92/ORE1-dependent manner.

The catalysed reaction is Endonucleolytic cleavage to 5'-phosphomononucleotide and 5'-phosphooligonucleotide end-products.. Its function is as follows. Endonuclease that can use RNA, single-stranded and double-stranded DNA as substrates. Hydrolyzes single-stranded DNA and RNA without apparent specificity for bases during senescence. Endonuclease that recognizes and cleaves all types of mismatches with high efficiency, including heteroduplex double-stranded DNA. Maybe involved in programmed cell death (PCD) and senescence. The protein is Endonuclease 1 of Arabidopsis thaliana (Mouse-ear cress).